Consider the following 32-residue polypeptide: Cytochrome b6-f complex subunit 7 (32 aa).

The helical transmembrane segment at 9-27 (AAVFWVLIPVGLAGGALLL) threads the bilayer.

The protein belongs to the PetM family. As to quaternary structure, the 4 large subunits of the cytochrome b6-f complex are cytochrome b6, subunit IV (17 kDa polypeptide, PetD), cytochrome f and the Rieske protein, while the 4 small subunits are PetG, PetL, PetM and PetN. The complex functions as a dimer.

The protein localises to the cellular thylakoid membrane. Its function is as follows. Component of the cytochrome b6-f complex, which mediates electron transfer between photosystem II (PSII) and photosystem I (PSI), cyclic electron flow around PSI, and state transitions. The protein is Cytochrome b6-f complex subunit 7 of Prochlorococcus marinus (strain MIT 9303).